A 378-amino-acid chain; its full sequence is Homeobox protein Meis3 (378 aa).

Residues 24–57 (FSEAAPSVPRAPGPYTPHRPPQLQAPGLDSDSLK) are disordered. The segment covering 32–43 (PRAPGPYTPHRP) has biased composition (pro residues). Residues 99–182 (GGDVCSSDSF…PIDLVIEDRD (84 aa)) form the MEIS N-terminal domain. Positions 203-265 (NTTWIRDHED…DEDLDLERRR (63 aa)) are disordered. Over residues 230–244 (SQSGDNSSDQGDGLD) the composition is skewed to low complexity. The segment at residues 265–327 (RNKKRGIFPK…NARRRIVQPM (63 aa)) is a DNA-binding region (homeobox; TALE-type).

It belongs to the TALE/MEIS homeobox family. In terms of tissue distribution, expressed at high levels in the brain. Significant expression also observed in the heart, spleen and lung. Expressed in pancreatic islets (beta-cells and non-beta-cells).

It localises to the nucleus. Transcriptional regulator which directly modulates PDPK1 expression, thus promoting survival of pancreatic beta-cells. Also regulates expression of NDFIP1, BNIP3, and CCNG1. The sequence is that of Homeobox protein Meis3 (Meis3) from Mus musculus (Mouse).